The following is a 461-amino-acid chain: Bifunctional protein GlmU (461 aa).

The interval 1–230 (MSKIHAVVLA…PEETLGVNDR (230 aa)) is pyrophosphorylase. UDP-N-acetyl-alpha-D-glucosamine is bound by residues 9 to 12 (LAAG), lysine 23, glutamine 73, 78 to 79 (GT), 101 to 103 (YGD), glycine 140, glutamate 155, asparagine 170, and asparagine 228. Aspartate 103 provides a ligand contact to Mg(2+). Asparagine 228 contributes to the Mg(2+) binding site. The linker stretch occupies residues 231-251 (VQLSEAEAYMKKRIMTGHMRN). Residues 252 to 461 (GVTIIDPTST…KMPRKGKKQS (210 aa)) are N-acetyltransferase. UDP-N-acetyl-alpha-D-glucosamine is bound by residues arginine 333 and lysine 351. The Proton acceptor role is filled by histidine 363. 2 residues coordinate UDP-N-acetyl-alpha-D-glucosamine: tyrosine 366 and asparagine 377. Residues 386 to 387 (NY), alanine 423, and arginine 440 each bind acetyl-CoA.

It in the N-terminal section; belongs to the N-acetylglucosamine-1-phosphate uridyltransferase family. In the C-terminal section; belongs to the transferase hexapeptide repeat family. Homotrimer. It depends on Mg(2+) as a cofactor.

The protein localises to the cytoplasm. It carries out the reaction alpha-D-glucosamine 1-phosphate + acetyl-CoA = N-acetyl-alpha-D-glucosamine 1-phosphate + CoA + H(+). The catalysed reaction is N-acetyl-alpha-D-glucosamine 1-phosphate + UTP + H(+) = UDP-N-acetyl-alpha-D-glucosamine + diphosphate. The protein operates within nucleotide-sugar biosynthesis; UDP-N-acetyl-alpha-D-glucosamine biosynthesis; N-acetyl-alpha-D-glucosamine 1-phosphate from alpha-D-glucosamine 6-phosphate (route II): step 2/2. Its pathway is nucleotide-sugar biosynthesis; UDP-N-acetyl-alpha-D-glucosamine biosynthesis; UDP-N-acetyl-alpha-D-glucosamine from N-acetyl-alpha-D-glucosamine 1-phosphate: step 1/1. It participates in bacterial outer membrane biogenesis; LPS lipid A biosynthesis. Catalyzes the last two sequential reactions in the de novo biosynthetic pathway for UDP-N-acetylglucosamine (UDP-GlcNAc). The C-terminal domain catalyzes the transfer of acetyl group from acetyl coenzyme A to glucosamine-1-phosphate (GlcN-1-P) to produce N-acetylglucosamine-1-phosphate (GlcNAc-1-P), which is converted into UDP-GlcNAc by the transfer of uridine 5-monophosphate (from uridine 5-triphosphate), a reaction catalyzed by the N-terminal domain. This is Bifunctional protein GlmU from Brevibacillus brevis (strain 47 / JCM 6285 / NBRC 100599).